A 551-amino-acid polypeptide reads, in one-letter code: Frizzled-2 (551 aa).

An N-terminal signal peptide occupies residues 1-26; sequence MQGVTRASILLIIYHLFTLSLGQLHG. At 27–231 the chain is on the extracellular side; the sequence is EKGISVPEHG…FSQDEIRFAR (205 aa). The 120-residue stretch at 33-152 folds into the FZ domain; it reads PEHGFCQPIS…HGAEQICVGQ (120 aa). 5 cysteine pairs are disulfide-bonded: cysteine 38–cysteine 99, cysteine 46–cysteine 92, cysteine 83–cysteine 120, cysteine 109–cysteine 149, and cysteine 113–cysteine 137. The N-linked (GlcNAc...) asparagine glycan is linked to asparagine 52. Asparagine 153 is a glycosylation site (N-linked (GlcNAc...) asparagine). A helical membrane pass occupies residues 232-252; that stretch reads IWILIWSVLCCASTFITVTTY. The Cytoplasmic segment spans residues 253–265; sequence LVDMQRFRYPERP. Residues 266 to 286 form a helical membrane-spanning segment; it reads IIFLSGCYTMVSVAYIAGFVL. Topologically, residues 287-313 are extracellular; sequence GDKVVCNEGFSEDGYKTVVQGTKKEGC. A helical transmembrane segment spans residues 314-334; sequence TILFMMLYFFSMASSIWWVIL. At 335 to 356 the chain is on the cytoplasmic side; it reads SLTWFLAAGMKWGHEAIEANSQ. A helical transmembrane segment spans residues 357–377; it reads YFHLAAWAVPAVKTITILAMG. At 378 to 400 the chain is on the extracellular side; that stretch reads QIDGDLLSGVCFVGLNNIDPLRG. A helical membrane pass occupies residues 401–421; it reads FVLAPLFVYLFIGTSFLLAGF. At 422–447 the chain is on the cytoplasmic side; that stretch reads VSLFRIRTIMKHDGTKTEKLERLMVR. Residues 448–468 form a helical membrane-spanning segment; the sequence is IGVFSVLYTVPATIVIACYFY. At 469 to 505 the chain is on the extracellular side; it reads EQAFREHWERSWVSQNCKSLAIPCPLQYTPRMTPDFT. A helical transmembrane segment spans residues 506-526; that stretch reads VYMIKYLMTLIVGITSGFWIW. Residues 527 to 534 lie on the Cytoplasmic side of the membrane; sequence SGKTLHSW. The short motif at 529–534 is the Lys-Thr-X-X-X-Trp motif, mediates interaction with the PDZ domain of Dvl family members element; sequence KTLHSW. Positions 549–551 match the PDZ-binding motif; the sequence is TTV.

This sequence belongs to the G-protein coupled receptor Fz/Smo family. In terms of tissue distribution, widely expressed, especially in the eye anlage, otic vesicle and developing somites.

It localises to the membrane. The protein localises to the cell membrane. Its function is as follows. Receptor for Wnt proteins. Most of frizzled receptors are coupled to the beta-catenin canonical signaling pathway, which leads to the activation of disheveled proteins, inhibition of GSK-3 kinase, nuclear accumulation of beta-catenin and activation of Wnt target genes. A second signaling pathway involving PKC and calcium fluxes has been seen for some family members, but it is not yet clear if it represents a distinct pathway or if it can be integrated in the canonical pathway, as PKC seems to be required for Wnt-mediated inactivation of GSK-3 kinase. Both pathways seem to involve interactions with G-proteins. May be involved in transduction and intercellular transmission of polarity information during tissue morphogenesis and/or in differentiated tissues. The chain is Frizzled-2 (fzd2) from Xenopus laevis (African clawed frog).